Reading from the N-terminus, the 247-residue chain is Probable transcriptional regulatory protein Syncc9605_2132 (247 aa).

This sequence belongs to the TACO1 family.

The protein resides in the cytoplasm. This chain is Probable transcriptional regulatory protein Syncc9605_2132, found in Synechococcus sp. (strain CC9605).